A 435-amino-acid chain; its full sequence is 5-methylthioadenosine/S-adenosylhomocysteine deaminase (435 aa).

Zn(2+)-binding residues include His-65 and His-67. Positions 94, 150, and 189 each coordinate substrate. His-216 is a binding site for Zn(2+). The substrate site is built by Glu-219 and Asp-304. Asp-304 is a Zn(2+) binding site.

Belongs to the metallo-dependent hydrolases superfamily. MTA/SAH deaminase family. Zn(2+) is required as a cofactor.

The enzyme catalyses S-adenosyl-L-homocysteine + H2O + H(+) = S-inosyl-L-homocysteine + NH4(+). The catalysed reaction is S-methyl-5'-thioadenosine + H2O + H(+) = S-methyl-5'-thioinosine + NH4(+). Catalyzes the deamination of 5-methylthioadenosine and S-adenosyl-L-homocysteine into 5-methylthioinosine and S-inosyl-L-homocysteine, respectively. Is also able to deaminate adenosine. This chain is 5-methylthioadenosine/S-adenosylhomocysteine deaminase, found in Bacillus thuringiensis (strain Al Hakam).